A 268-amino-acid chain; its full sequence is 4-hydroxy-tetrahydrodipicolinate reductase (268 aa).

NAD(+)-binding positions include 10–15 (GSTGRM), glutamate 36, 99–101 (GTT), and 123–126 (APNM). The Proton donor/acceptor role is filled by histidine 156. Histidine 157 contacts (S)-2,3,4,5-tetrahydrodipicolinate. Lysine 160 serves as the catalytic Proton donor. Residue 166 to 167 (GT) coordinates (S)-2,3,4,5-tetrahydrodipicolinate.

It belongs to the DapB family.

The protein localises to the cytoplasm. It carries out the reaction (S)-2,3,4,5-tetrahydrodipicolinate + NAD(+) + H2O = (2S,4S)-4-hydroxy-2,3,4,5-tetrahydrodipicolinate + NADH + H(+). It catalyses the reaction (S)-2,3,4,5-tetrahydrodipicolinate + NADP(+) + H2O = (2S,4S)-4-hydroxy-2,3,4,5-tetrahydrodipicolinate + NADPH + H(+). It participates in amino-acid biosynthesis; L-lysine biosynthesis via DAP pathway; (S)-tetrahydrodipicolinate from L-aspartate: step 4/4. In terms of biological role, catalyzes the conversion of 4-hydroxy-tetrahydrodipicolinate (HTPA) to tetrahydrodipicolinate. The protein is 4-hydroxy-tetrahydrodipicolinate reductase of Nitrosomonas europaea (strain ATCC 19718 / CIP 103999 / KCTC 2705 / NBRC 14298).